A 384-amino-acid polypeptide reads, in one-letter code: S-adenosylmethionine synthase (384 aa).

ATP is bound at residue His-15. Asp-17 is a Mg(2+) binding site. Residue Glu-43 participates in K(+) binding. 2 residues coordinate L-methionine: Glu-56 and Gln-99. Residues 99–109 (QSSDINQGVDR) form a flexible loop region. Residues 164 to 166 (DAK), 230 to 231 (RF), Asp-239, 245 to 246 (RK), Ala-262, and Lys-266 each bind ATP. An L-methionine-binding site is contributed by Asp-239. Residue Lys-270 participates in L-methionine binding.

Belongs to the AdoMet synthase family. Homotetramer; dimer of dimers. Mg(2+) is required as a cofactor. The cofactor is K(+).

Its subcellular location is the cytoplasm. It catalyses the reaction L-methionine + ATP + H2O = S-adenosyl-L-methionine + phosphate + diphosphate. It functions in the pathway amino-acid biosynthesis; S-adenosyl-L-methionine biosynthesis; S-adenosyl-L-methionine from L-methionine: step 1/1. In terms of biological role, catalyzes the formation of S-adenosylmethionine (AdoMet) from methionine and ATP. The overall synthetic reaction is composed of two sequential steps, AdoMet formation and the subsequent tripolyphosphate hydrolysis which occurs prior to release of AdoMet from the enzyme. This chain is S-adenosylmethionine synthase, found in Histophilus somni (strain 129Pt) (Haemophilus somnus).